Consider the following 349-residue polypeptide: N-acetyl-gamma-glutamyl-phosphate reductase (349 aa).

Cys-149 is an active-site residue.

This sequence belongs to the NAGSA dehydrogenase family. Type 1 subfamily.

The protein resides in the cytoplasm. It catalyses the reaction N-acetyl-L-glutamate 5-semialdehyde + phosphate + NADP(+) = N-acetyl-L-glutamyl 5-phosphate + NADPH + H(+). Its pathway is amino-acid biosynthesis; L-arginine biosynthesis; N(2)-acetyl-L-ornithine from L-glutamate: step 3/4. Functionally, catalyzes the NADPH-dependent reduction of N-acetyl-5-glutamyl phosphate to yield N-acetyl-L-glutamate 5-semialdehyde. The polypeptide is N-acetyl-gamma-glutamyl-phosphate reductase (Acinetobacter baylyi (strain ATCC 33305 / BD413 / ADP1)).